The following is a 104-amino-acid chain: Large ribosomal subunit protein bL21 (104 aa).

The protein belongs to the bacterial ribosomal protein bL21 family. Part of the 50S ribosomal subunit. Contacts protein L20.

Its function is as follows. This protein binds to 23S rRNA in the presence of protein L20. The sequence is that of Large ribosomal subunit protein bL21 from Gluconacetobacter diazotrophicus (strain ATCC 49037 / DSM 5601 / CCUG 37298 / CIP 103539 / LMG 7603 / PAl5).